Here is a 347-residue protein sequence, read N- to C-terminus: Protein O-mannose kinase (347 aa).

Residues M1–C14 lie on the Cytoplasmic side of the membrane. Residues G15–F35 traverse the membrane as a helical; Signal-anchor for type II membrane protein segment. Over Y36–L347 the chain is Lumenal. The 269-residue stretch at V79–L347 folds into the Protein kinase domain.

This sequence belongs to the protein kinase superfamily. Ser/Thr protein kinase family. STKL subfamily.

It localises to the endoplasmic reticulum membrane. The catalysed reaction is 3-O-[beta-D-GalNAc-(1-&gt;3)-beta-D-GlcNAc-(1-&gt;4)-alpha-D-Man]-L-Thr-[protein] + ATP = 3-O-[beta-D-GalNAc-(1-&gt;3)-beta-D-GlcNAc-(1-&gt;4)-(O-6-P-alpha-D-Man)]-Thr-[protein] + ADP + H(+). Protein O-mannose kinase that specifically mediates phosphorylation at the 6-position of an O-mannose of the trisaccharide (N-acetylgalactosamine (GalNAc)-beta-1,3-N-acetylglucosamine (GlcNAc)-beta-1,4-mannose) to generate phosphorylated O-mannosyl trisaccharide (N-acetylgalactosamine-beta-1,3-N-acetylglucosamine-beta-1,4-(phosphate-6-)mannose). Phosphorylated O-mannosyl trisaccharide is a carbohydrate structure present in alpha-dystroglycan (dag1), which is required for binding laminin G-like domain-containing extracellular proteins with high affinity. Only shows kinase activity when the GalNAc-beta-3-GlcNAc-beta-terminus is linked to the 4-position of O-mannose, suggesting that this disaccharide serves as the substrate recognition motif. The protein is Protein O-mannose kinase (pomk) of Danio rerio (Zebrafish).